We begin with the raw amino-acid sequence, 118 residues long: Large ribosomal subunit protein bL19 (118 aa).

It belongs to the bacterial ribosomal protein bL19 family.

In terms of biological role, this protein is located at the 30S-50S ribosomal subunit interface and may play a role in the structure and function of the aminoacyl-tRNA binding site. This is Large ribosomal subunit protein bL19 from Alcanivorax borkumensis (strain ATCC 700651 / DSM 11573 / NCIMB 13689 / SK2).